Consider the following 417-residue polypeptide: uncharacterized protein (417 aa).

It belongs to the MG032/MG096/MG288 family.

This is an uncharacterized protein from Mycoplasma pneumoniae (strain ATCC 29342 / M129 / Subtype 1) (Mycoplasmoides pneumoniae).